Consider the following 85-residue polypeptide: Putative membrane protein insertion efficiency factor (85 aa).

Belongs to the UPF0161 family.

The protein localises to the cell inner membrane. In terms of biological role, could be involved in insertion of integral membrane proteins into the membrane. The sequence is that of Putative membrane protein insertion efficiency factor from Enterobacter sp. (strain 638).